Consider the following 310-residue polypeptide: ADP-L-glycero-D-manno-heptose-6-epimerase (310 aa).

NADP(+) is bound by residues 10-11 (FI), 31-32 (DN), Lys-38, Lys-53, 75-79 (EGACS), and Asn-92. Tyr-140 acts as the Proton acceptor in catalysis. Lys-144 is an NADP(+) binding site. Asn-169 is a substrate binding site. NADP(+)-binding residues include Val-170 and Lys-178. Catalysis depends on Lys-178, which acts as the Proton acceptor. Residues Ser-180, His-187, 201 to 204 (FEGS), Arg-209, and Tyr-272 contribute to the substrate site.

Belongs to the NAD(P)-dependent epimerase/dehydratase family. HldD subfamily. As to quaternary structure, homopentamer. It depends on NADP(+) as a cofactor.

It catalyses the reaction ADP-D-glycero-beta-D-manno-heptose = ADP-L-glycero-beta-D-manno-heptose. It participates in nucleotide-sugar biosynthesis; ADP-L-glycero-beta-D-manno-heptose biosynthesis; ADP-L-glycero-beta-D-manno-heptose from D-glycero-beta-D-manno-heptose 7-phosphate: step 4/4. In terms of biological role, catalyzes the interconversion between ADP-D-glycero-beta-D-manno-heptose and ADP-L-glycero-beta-D-manno-heptose via an epimerization at carbon 6 of the heptose. The chain is ADP-L-glycero-D-manno-heptose-6-epimerase from Cronobacter sakazakii (strain ATCC BAA-894) (Enterobacter sakazakii).